A 785-amino-acid chain; its full sequence is MDAVIRGNDVIFVLKTIGVPSVCRQNEDPRFVEAFKCDELERYIKNNPECTLFESLRDEEAYSIVRIFMDVDLDACLDEIDYLTAIQDFIIEVSNCVARFAFTECGAIHENVIKSMRSNFSLTKSTNRDKTSFHIIFLDTYTTMDTLIAMKRTLLELSRSSENPLTRSIDTAVYRKKTTLRVVGTRKNPNCDTIHVMQPPHDNIEDYLFTYVDMNNNSYYFSLQRRLEDLVPDKLWEPGFISFEDAIKRVSKIFINSIINFNDLDENNFTTVPLVIDYVTPCALCKKRSHKHPHQLSLENDAIRIYKTGNPHSCKVKIVPLDGNKLFNIAQRILDTNSVLLTERGDHIVWINNSWKFNSEEPLITKLILSIRHQLPKEYSSELLCPRKRKTVEANIRDMLVDSVETDTYPDKLPFKNGVLDLVDGMFYSGDDAKKYTCTVSTGFKFDDTKFVEDSPEMEELINIINDIQPLTDENKKNRELYEKTLSSCLCGATKGCLTFFFGETATGKSTTKRLLKSAISDLFVETGQTILTDVLDKGPNPFIANMHLKRSVFCSELPDFACSGTKKIRSDNIKKLTEPCVIGRPCFSNKINNRNHATIIIDTNYKPVFDRIDNALMRRIAVVRFRTHFSQPSGREAAENNDAYDKVKLLDEGLDGKIQNNRYRFAFLYLLVKWYRKYHVPIMKLYPTPEEIPDFAFYLKIGTLLVSSSVKHIPLMTDLSKKGYILHDNVVTLPLTTFQQKISKYFNSRLFGHDIESFINRHKKFANVSDEYLQYIFIEDISSP.

The active site involves D170. A primase region spans residues 342-469 (TERGDHIVWI…ELINIINDIQ (128 aa)). The SF3 helicase domain maps to 477-639 (KNRELYEKTL…FSQPSGREAA (163 aa)). ATP is bound at residue 503–510 (GETATGKS).

This sequence belongs to the orthopoxvirus OPG117 family. In terms of assembly, homomultimer; hexamer. Interacts with OPG148.

The protein localises to the host cytoplasm. Its function is as follows. Multifunctional protein required for genome uncoating and replication. Major viral uncoating protein that is required for the release of the viral genome from incoming viral cores containing the viral DNA genome. Possesses an ATPase activity that is required for hexamerization and uncoating. This chain is Uncoating factor OPG117 (OPG117), found in Variola virus (isolate Human/India/Ind3/1967) (VARV).